The sequence spans 220 residues: Adenylate kinase (220 aa).

10–15 (GAGKGT) contacts ATP. An NMP region spans residues 30–59 (STGDMLRAAVKAGSPLGVEAKGYMDAGKLV). AMP contacts are provided by residues Thr-31, Arg-36, 57-59 (KLV), 85-88 (GFPR), and Gln-92. The tract at residues 122–150 (GRRTHPASGRTYHVKFNPPKVEGKDDVTG) is disordered. Residues 122 to 159 (GRRTHPASGRTYHVKFNPPKVEGKDDVTGEPLIQRDDD) form an LID region. ATP contacts are provided by residues Arg-123 and 132–133 (TY). Residues Arg-156 and Arg-167 each coordinate AMP. Gly-206 lines the ATP pocket.

Belongs to the adenylate kinase family. As to quaternary structure, monomer.

Its subcellular location is the cytoplasm. It catalyses the reaction AMP + ATP = 2 ADP. It participates in purine metabolism; AMP biosynthesis via salvage pathway; AMP from ADP: step 1/1. Functionally, catalyzes the reversible transfer of the terminal phosphate group between ATP and AMP. Plays an important role in cellular energy homeostasis and in adenine nucleotide metabolism. The chain is Adenylate kinase from Burkholderia ambifaria (strain MC40-6).